A 371-amino-acid polypeptide reads, in one-letter code: Peptide chain release factor 2 (371 aa).

At glutamine 253 the chain carries N5-methylglutamine.

It belongs to the prokaryotic/mitochondrial release factor family. Post-translationally, methylated by PrmC. Methylation increases the termination efficiency of RF2.

The protein resides in the cytoplasm. Functionally, peptide chain release factor 2 directs the termination of translation in response to the peptide chain termination codons UGA and UAA. This is Peptide chain release factor 2 (prfB) from Mycobacterium bovis (strain ATCC BAA-935 / AF2122/97).